Here is a 153-residue protein sequence, read N- to C-terminus: Small ribosomal subunit protein bS6 (153 aa).

The disordered stretch occupies residues 94 to 153 (EAHEEGPSAMMQKRDRDDRPRRDGDRPDRGPREDRGPRPPREGGFGDREDRPRRPREDRA).

It belongs to the bacterial ribosomal protein bS6 family.

Its function is as follows. Binds together with bS18 to 16S ribosomal RNA. This is Small ribosomal subunit protein bS6 from Agrobacterium fabrum (strain C58 / ATCC 33970) (Agrobacterium tumefaciens (strain C58)).